Consider the following 249-residue polypeptide: (2S)-[(R)-hydroxy(phenyl)methyl]succinyl-CoA dehydrogenase subunit BbsC (249 aa).

It belongs to the short-chain dehydrogenases/reductases (SDR) family. Heterotetramer composed of 2 inactive BbsC subunits and 2 active BbsD subunits.

It participates in xenobiotic degradation; toluene degradation. Functionally, involved in an anaerobic toluene degradation pathway. Catalytically inactive subunit, which is probably required for the structural and/or regulatory integrity of the catalytic subunit BbsD. This subunit cannot bind NAD(+) or substrate. This Thauera aromatica protein is (2S)-[(R)-hydroxy(phenyl)methyl]succinyl-CoA dehydrogenase subunit BbsC.